The following is a 186-amino-acid chain: Ribosome-recycling factor (186 aa).

This sequence belongs to the RRF family.

It is found in the cytoplasm. In terms of biological role, responsible for the release of ribosomes from messenger RNA at the termination of protein biosynthesis. May increase the efficiency of translation by recycling ribosomes from one round of translation to another. In Methylibium petroleiphilum (strain ATCC BAA-1232 / LMG 22953 / PM1), this protein is Ribosome-recycling factor.